Consider the following 252-residue polypeptide: Large ribosomal subunit protein uL4 (252 aa).

Belongs to the universal ribosomal protein uL4 family. As to quaternary structure, part of the 50S ribosomal subunit.

In terms of biological role, one of the primary rRNA binding proteins, this protein initially binds near the 5'-end of the 23S rRNA. It is important during the early stages of 50S assembly. It makes multiple contacts with different domains of the 23S rRNA in the assembled 50S subunit and ribosome. Its function is as follows. Forms part of the polypeptide exit tunnel. This chain is Large ribosomal subunit protein uL4, found in Methanococcus vannielii (strain ATCC 35089 / DSM 1224 / JCM 13029 / OCM 148 / SB).